A 245-amino-acid polypeptide reads, in one-letter code: Phosducin (245 aa).

The interval 1–67 (MEEARRQSLE…SRDDKDSKER (67 aa)) is disordered. The region spanning 1 to 241 (MEEARRQSLE…IHALEQTSME (241 aa)) is the Phosducin domain. The span at 58–67 (SRDDKDSKER) shows a compositional bias: basic and acidic residues. Ser73 bears the Phosphoserine; by PKA mark. The thioredoxin fold stretch occupies residues 111 to 245 (YGFVYELETG…EQTSMEEDVE (135 aa)).

The protein belongs to the phosducin family. Forms a complex with the beta and gamma subunits of the GTP-binding protein, transducin. Interacts with CRX. In terms of processing, light-induced changes in cyclic nucleotide levels modulate the phosphorylation of this protein by cAMP kinase.

The protein localises to the cytoplasm. It is found in the cytosol. The protein resides in the nucleus. It localises to the cell projection. Its subcellular location is the cilium. The protein localises to the photoreceptor outer segment. It is found in the photoreceptor inner segment. Functionally, may participate in the regulation of visual phototransduction or in the integration of photoreceptor metabolism. Inhibits the transcriptional activation activity of the cone-rod homeobox CRX. In Equus caballus (Horse), this protein is Phosducin (PDC).